The following is a 523-amino-acid chain: Glutamate--cysteine ligase (523 aa).

Belongs to the glutamate--cysteine ligase type 1 family. Type 1 subfamily.

The enzyme catalyses L-cysteine + L-glutamate + ATP = gamma-L-glutamyl-L-cysteine + ADP + phosphate + H(+). It functions in the pathway sulfur metabolism; glutathione biosynthesis; glutathione from L-cysteine and L-glutamate: step 1/2. The polypeptide is Glutamate--cysteine ligase (Shewanella oneidensis (strain ATCC 700550 / JCM 31522 / CIP 106686 / LMG 19005 / NCIMB 14063 / MR-1)).